A 256-amino-acid chain; its full sequence is Thiazole synthase (256 aa).

The active-site Schiff-base intermediate with DXP is the Lys96. 1-deoxy-D-xylulose 5-phosphate is bound by residues Gly157, 184–185 (AG), and 206–207 (NT).

This sequence belongs to the ThiG family. As to quaternary structure, homotetramer. Forms heterodimers with either ThiH or ThiS.

It localises to the cytoplasm. The enzyme catalyses [ThiS sulfur-carrier protein]-C-terminal-Gly-aminoethanethioate + 2-iminoacetate + 1-deoxy-D-xylulose 5-phosphate = [ThiS sulfur-carrier protein]-C-terminal Gly-Gly + 2-[(2R,5Z)-2-carboxy-4-methylthiazol-5(2H)-ylidene]ethyl phosphate + 2 H2O + H(+). The protein operates within cofactor biosynthesis; thiamine diphosphate biosynthesis. In terms of biological role, catalyzes the rearrangement of 1-deoxy-D-xylulose 5-phosphate (DXP) to produce the thiazole phosphate moiety of thiamine. Sulfur is provided by the thiocarboxylate moiety of the carrier protein ThiS. In vitro, sulfur can be provided by H(2)S. This is Thiazole synthase from Brucella melitensis biotype 2 (strain ATCC 23457).